The sequence spans 970 residues: Vacuolar membrane protease (970 aa).

Residues 1–12 (MTTADSNSSATR) are compositionally biased toward polar residues. The segment at 1–35 (MTTADSNSSATRGSHEMADGSNRVPNDEPYHRKSP) is disordered. At 1–56 (MTTADSNSSATRGSHEMADGSNRVPNDEPYHRKSPESCENANFFVRAMRASFGYRK) the chain is on the cytoplasmic side. Residues 25–35 (PNDEPYHRKSP) show a composition bias toward basic and acidic residues. The chain crosses the membrane as a helical span at residues 57 to 77 (TSLTILVFLSVIATVLLSYYD). Residues 78-397 (SSLEFSVSLP…FVVPMTFVFG (320 aa)) are Vacuolar-facing. N-linked (GlcNAc...) asparagine glycosylation is found at Asn-146 and Asn-173. Zn(2+)-binding residues include His-187 and Asp-199. Glu-234 (proton acceptor) is an active-site residue. Zn(2+) is bound by residues Glu-235, Glu-260, and His-333. Residues 398-418 (VNVLLMVLVPLVSLISLALIF) form a helical membrane-spanning segment. Over 419-423 (AHRKW) the chain is Cytoplasmic. Residues 424 to 444 (SVSLVTFFKFPLSFILSIFLL) form a helical membrane-spanning segment. Over 445–465 (DNFSSWFVVSVNNFLPNSSAG) the chain is Vacuolar. N-linked (GlcNAc...) asparagine glycans are attached at residues Asn-446 and Asn-461. The helical transmembrane segment at 466 to 486 (IIALTYFSFFVLANYLLLNGI) threads the bilayer. Residues 487-502 (NLLFWKFKGTRHDEKL) are Cytoplasmic-facing. The helical transmembrane segment at 503 to 523 (VVILQISFMFWVSLIWSTANI) threads the bilayer. The Vacuolar segment spans residues 524-535 (AKSQFNGEHSGE). A helical transmembrane segment spans residues 536 to 556 (FLLTLLYILQAAGGVFGLLCW). Topologically, residues 557-620 (LFKRSRTVHT…PTKHYSYDWS (64 aa)) are cytoplasmic. The helical transmembrane segment at 621–641 (IQFLFIVPISSFLSYNYGWLI) threads the bilayer. Residues 642 to 658 (LEGLKKTLQESATSEYL) lie on the Vacuolar side of the membrane. A helical membrane pass occupies residues 659 to 679 (VFRALKLLAVVVAVPYLPFIF). Over 680-683 (KVNR) the chain is Cytoplasmic. The helical transmembrane segment at 684-704 (IVFLVTIFLFVYGLGAIVISE) threads the bilayer. Over 705-970 (PFTEANPLKL…LVNVKKSVLV (266 aa)) the chain is Vacuolar. Residues Asn-738, Asn-797, and Asn-877 are each glycosylated (N-linked (GlcNAc...) asparagine).

Belongs to the peptidase M28 family. Zn(2+) serves as cofactor.

The protein localises to the vacuole membrane. Its function is as follows. May be involved in vacuolar sorting and osmoregulation. In Meyerozyma guilliermondii (strain ATCC 6260 / CBS 566 / DSM 6381 / JCM 1539 / NBRC 10279 / NRRL Y-324) (Yeast), this protein is Vacuolar membrane protease.